Here is a 286-residue protein sequence, read N- to C-terminus: Urease accessory protein UreD (286 aa).

This sequence belongs to the UreD family. In terms of assembly, ureD, UreF and UreG form a complex that acts as a GTP-hydrolysis-dependent molecular chaperone, activating the urease apoprotein by helping to assemble the nickel containing metallocenter of UreC. The UreE protein probably delivers the nickel.

It localises to the cytoplasm. Functionally, required for maturation of urease via the functional incorporation of the urease nickel metallocenter. The polypeptide is Urease accessory protein UreD (Rhodopseudomonas palustris (strain BisA53)).